The following is a 388-amino-acid chain: MRYLTAGESHGPGLTTIIEGLPAGMPLLAEDVNKELKRRQGGHGRGARMRIEKDQVQITAGIRHGKTLGAPVAMFVENKDWKHWETVMSIEPVPEKNEKSRRVSRPRPGHADLVGGMKYGHNDMRNVLERSSARETTVRVAAGAIAKKLLHELGIEVAGHVLEIGGTRANLTRDFSVSEIKETSEASPVRCLDEVAEKEMMQKIDDAKKNGDTIGGIVEVVVGGVPAGLGSYVQWDKKLDAKIARAIVSINAFKGAEFGVGFEAARKPGSEVMDEILWSKEDGYTRRTNNLGGFEGGMTNGMPIVVRGVMKPIPTLYKPLQSVDIDSKETFNASVERSDSCAVPAASVVAEAVVAWEVAVAVLEKFDGDRFDTLKKHVEEHRNLTKEF.

NADP(+) contacts are provided by R39 and R45. Residues 95–118 are disordered; sequence EKNEKSRRVSRPRPGHADLVGGMK. FMN is bound by residues 130–132, 251–252, G296, 311–315, and R337; these read RSS, NA, and KPIPT.

The protein belongs to the chorismate synthase family. As to quaternary structure, homotetramer. Requires FMNH2 as cofactor.

The catalysed reaction is 5-O-(1-carboxyvinyl)-3-phosphoshikimate = chorismate + phosphate. The protein operates within metabolic intermediate biosynthesis; chorismate biosynthesis; chorismate from D-erythrose 4-phosphate and phosphoenolpyruvate: step 7/7. In terms of biological role, catalyzes the anti-1,4-elimination of the C-3 phosphate and the C-6 proR hydrogen from 5-enolpyruvylshikimate-3-phosphate (EPSP) to yield chorismate, which is the branch point compound that serves as the starting substrate for the three terminal pathways of aromatic amino acid biosynthesis. This reaction introduces a second double bond into the aromatic ring system. The sequence is that of Chorismate synthase from Listeria welshimeri serovar 6b (strain ATCC 35897 / DSM 20650 / CCUG 15529 / CIP 8149 / NCTC 11857 / SLCC 5334 / V8).